We begin with the raw amino-acid sequence, 341 residues long: Cell division protein FtsX (341 aa).

The disordered stretch occupies residues 1 to 34 (MSTTRTPKVSERVAPKPADPQPAKKKRGEDDDGP). The Cytoplasmic segment spans residues 1–65 (MSTTRTPKVS…RRLGKQPIGS (65 aa)). Residues 66–86 (FFTCLVMAVALSMPMGLSLLL) traverse the membrane as a helical segment. Residues 87–212 (KNIEQLGGSW…LAAILKLGDR (126 aa)) are Periplasmic-facing. A helical membrane pass occupies residues 213–233 (FVFGLAVMLISALLLVIGNTI). The Cytoplasmic segment spans residues 234-263 (RLHIENRRIEIEVIKLVGGTDAYVRRPFLY). The chain crosses the membrane as a helical span at residues 264-284 (MGALYGLGAGLLAWGILAFGL). The Periplasmic segment spans residues 285-311 (NWLNEAVVGLSGLYGSDFALGGVPASD). The helical transmembrane segment at 312 to 332 (GLSLLIGAVLLGYIGAWIAVA) threads the bilayer. Topologically, residues 333–341 (RHLNELAPR) are cytoplasmic.

This sequence belongs to the ABC-4 integral membrane protein family. FtsX subfamily. As to quaternary structure, forms a membrane-associated complex with FtsE.

The protein resides in the cell inner membrane. In terms of biological role, part of the ABC transporter FtsEX involved in cellular division. The protein is Cell division protein FtsX of Pseudomonas putida (Arthrobacter siderocapsulatus).